The chain runs to 246 residues: UDP-N-acetyl-D-mannosaminuronic acid transferase (246 aa).

The protein belongs to the glycosyltransferase 26 family.

The enzyme catalyses UDP-N-acetyl-alpha-D-mannosaminouronate + N-acetyl-alpha-D-glucosaminyl-di-trans,octa-cis-undecaprenyl diphosphate = beta-D-ManNAcA-(1-&gt;4)-alpha-D-GlcNAc-di-trans,octa-cis-undecaprenyl diphosphate + UDP + H(+). Its pathway is bacterial outer membrane biogenesis; enterobacterial common antigen biosynthesis. Its function is as follows. Catalyzes the synthesis of Und-PP-GlcNAc-ManNAcA (Lipid II), the second lipid-linked intermediate involved in enterobacterial common antigen (ECA) synthesis. In Salmonella choleraesuis (strain SC-B67), this protein is UDP-N-acetyl-D-mannosaminuronic acid transferase.